The chain runs to 183 residues: Isopentenyl-diphosphate Delta-isomerase (183 aa).

Mn(2+) is bound by residues H26 and H33. Residues 31-169 form the Nudix hydrolase domain; the sequence is PLHFAFSCYV…PFAFSPWMVE (139 aa). C68 is a catalytic residue. C68 is a Mg(2+) binding site. H70 is a Mn(2+) binding site. E88 lines the Mg(2+) pocket. Residues E118 and E120 each coordinate Mn(2+). E120 is a catalytic residue.

This sequence belongs to the IPP isomerase type 1 family. Mg(2+) is required as a cofactor. Mn(2+) serves as cofactor.

The protein localises to the cytoplasm. It carries out the reaction isopentenyl diphosphate = dimethylallyl diphosphate. It functions in the pathway isoprenoid biosynthesis; dimethylallyl diphosphate biosynthesis; dimethylallyl diphosphate from isopentenyl diphosphate: step 1/1. Functionally, catalyzes the 1,3-allylic rearrangement of the homoallylic substrate isopentenyl (IPP) to its highly electrophilic allylic isomer, dimethylallyl diphosphate (DMAPP). In Corynebacterium diphtheriae (strain ATCC 700971 / NCTC 13129 / Biotype gravis), this protein is Isopentenyl-diphosphate Delta-isomerase.